A 332-amino-acid chain; its full sequence is Acryloyl-coenzyme A reductase (332 aa).

Cys-38 contributes to the Zn(2+) binding site. NADP(+) is bound at residue Tyr-39. Residues His-60, Asp-90, Cys-93, Cys-96, Cys-104, and Cys-146 each coordinate Zn(2+). Residues 172–175 (SGGV) and 194–196 (TTS) each bind NADP(+).

This sequence belongs to the zinc-containing alcohol dehydrogenase family. Monomer. Requires Zn(2+) as cofactor.

The catalysed reaction is propanoyl-CoA + NADP(+) = acryloyl-CoA + NADPH + H(+). Plays a role in autotrophic carbon fixation via the 3-hydroxypropionate/4-hydroxybutyrate cycle. Catalyzes the acryloyl-CoA dependent NADPH oxidation and formation of propionyl-CoA. The chain is Acryloyl-coenzyme A reductase from Metallosphaera sedula (strain ATCC 51363 / DSM 5348 / JCM 9185 / NBRC 15509 / TH2).